A 280-amino-acid chain; its full sequence is Urease accessory protein UreD 1 (280 aa).

This sequence belongs to the UreD family. As to quaternary structure, ureD, UreF and UreG form a complex that acts as a GTP-hydrolysis-dependent molecular chaperone, activating the urease apoprotein by helping to assemble the nickel containing metallocenter of UreC. The UreE protein probably delivers the nickel.

It localises to the cytoplasm. In terms of biological role, required for maturation of urease via the functional incorporation of the urease nickel metallocenter. The sequence is that of Urease accessory protein UreD 1 from Brucella abortus biovar 1 (strain 9-941).